The primary structure comprises 1102 residues: MTYQKLNVNTYSNLQIFNMPDLIEIQRASFRWFLEYGLIEELDSYSPITDYTGKLELHFIAKNYKLKQPKYSVEESKRRDSSYAVQMYVPTRLINKETGEIKEQEVFIGDLPLMTDRGTFIINGAERVIVNQIVRSPGVYYKSETDKSGRRTYNASLIPNRGAWLKFETDKNDLVWVRIDKTRKLSAQVLLKALGLGDSEIFDSLRHPDYFQKTIEKEGQYGEEEALLELYRKLRPGEPPTIAGGEQLLHSRFFDQKRYDLGQVGRYKLNNKLRLNLPNTVRVLTKEDILASIDYLINLEYDIGQTDDIDHLGNRRVRSVGELLQNQIRVGLNRLERIIRERMTVSESETLTPTSLVNPKPLVAAIKEFFGSSQLSQFMDQTNPLAELTHKRRISALGPGGLTRERAGFAVRDIHPSHYGRICPIETPEGPNAGLIGSLANHAKVNSYGFIETPYYPVENGRVLRDRTPIYMTADAEDDLRVAPGDIMTDAEGKILGDVVPVRYRQDFTTTNPQQVDYVAVSPVQVVSVATSLIPFLEHDDANRALMGSNMQRQAVPLLNPDRPLVGTGLEPQAARDSGMVVVTRTDGEVSYVDSTKISVIDKEGNQADYPLCKYQRSNQDTCLNQRPLVFEGDQVVAGQVLADGSSTEGAELALGQNVLVAYMPWEGYNYEDAILISERLVYDDVYTSIHIEKFEIEARQTKLGPEEITREIPNVGEDGLRNLDEQGIIRVGAWVQSGDILVGKVTPKGESDQPPEEKLLRAIFGEKARDVRDNSLRVPNGEKGRIVDVRVFTREKGDELPPGANMVVRVYVAQKRKIQVGDKVAGRHGNKGIISRILPIEDMPYLPDGTPIDVVLNPLGVPSRMNVGQIFECLLGWAGEILSVRFKCVPFDEMHGPEKSRETVHLMLKLARDNSGKDWVFDEKHPGKIWVFDGRTGERFDRPVTVGIAYMLKLVHLVDDKIHARSTGPYSLVTQQPLGGKAQQGGQRFGEMEVWALEAFGAAYTLQELLTVKSDDMQGRNEALNAIVKGKAIPRPGTPESFKVLMRELQSLCLDIAAHKVETVDDGTTQDVEVDLMADLPGKRTPSRPIYESLSTEGNQD.

Residues 1081 to 1102 form a disordered region; it reads LPGKRTPSRPIYESLSTEGNQD.

Belongs to the RNA polymerase beta chain family. In terms of assembly, in cyanobacteria the RNAP catalytic core is composed of 2 alpha, 1 beta, 1 beta', 1 gamma and 1 omega subunit. When a sigma factor is associated with the core the holoenzyme is formed, which can initiate transcription.

The enzyme catalyses RNA(n) + a ribonucleoside 5'-triphosphate = RNA(n+1) + diphosphate. Functionally, DNA-dependent RNA polymerase catalyzes the transcription of DNA into RNA using the four ribonucleoside triphosphates as substrates. This is DNA-directed RNA polymerase subunit beta from Trichodesmium erythraeum (strain IMS101).